A 155-amino-acid chain; its full sequence is Small ribosomal subunit protein uS7 (155 aa).

This sequence belongs to the universal ribosomal protein uS7 family. Part of the 30S ribosomal subunit. Contacts proteins S9 and S11.

One of the primary rRNA binding proteins, it binds directly to 16S rRNA where it nucleates assembly of the head domain of the 30S subunit. Is located at the subunit interface close to the decoding center, probably blocks exit of the E-site tRNA. The chain is Small ribosomal subunit protein uS7 from Cytophaga hutchinsonii (strain ATCC 33406 / DSM 1761 / CIP 103989 / NBRC 15051 / NCIMB 9469 / D465).